The chain runs to 470 residues: Putative multidrug resistance protein MdtD (470 aa).

The Periplasmic segment spans residues 1–11; it reads MTELPDNTRWQ. Residues 12–32 form a helical membrane-spanning segment; that stretch reads LWIVALGFFMQSLDTTIVNTA. Residues 33-48 are Cytoplasmic-facing; the sequence is LPSMAKSLGESPLHMH. A helical membrane pass occupies residues 49 to 69; that stretch reads MVVVSYVLTVAVMLPASGWLA. The Periplasmic segment spans residues 70–76; the sequence is DKIGVRN. A helical membrane pass occupies residues 77–97; it reads IFFAAIVLFTLGSLFCALSGT. The Cytoplasmic portion of the chain corresponds to 98-101; that stretch reads LNQL. The chain crosses the membrane as a helical span at residues 102–124; the sequence is VLARVLQGVGGAMMVPVGRLTVM. Topologically, residues 125–137 are periplasmic; that stretch reads KIVPRAQYMAAMT. The chain crosses the membrane as a helical span at residues 138–158; that stretch reads FVTLPGQIGPLLGPALGGVLV. Over 159-164 the chain is Cytoplasmic; it reads EYASWH. Residues 165–185 traverse the membrane as a helical segment; the sequence is WIFLINIPVGIVGAMATFMLM. Residues 186-196 lie on the Periplasmic side of the membrane; that stretch reads PNYTIETRRFD. Residues 197–217 traverse the membrane as a helical segment; that stretch reads LPGFLLLAIGMAVLTLALDGS. The Cytoplasmic portion of the chain corresponds to 218-221; sequence KSMG. A helical membrane pass occupies residues 222–242; sequence ISPWTLAGLAAGGAAAILLYL. The Periplasmic portion of the chain corresponds to 243-262; it reads LHAKKNSGALFSLRLFRTPT. Residues 263-283 traverse the membrane as a helical segment; it reads FSLGLLGSFAGRIGSGMLPFM. Residues 284–285 are Cytoplasmic-facing; that stretch reads TP. The chain crosses the membrane as a helical span at residues 286 to 306; the sequence is VFLQIGLGFSPFHAGLMMIPM. Over 307-341 the chain is Periplasmic; that stretch reads VLGSMGMKRIVVQIVNRFGYRRVLVATTLGLALVS. A helical membrane pass occupies residues 342–362; that stretch reads LLFMSVALLGWYYLLPLVLLL. At 363–395 the chain is on the cytoplasmic side; it reads QGMVNSARFSSMNTLTLKDLPDTLASSGNSLLS. A helical transmembrane segment spans residues 396–416; the sequence is MIMQLSMSIGVTIAGMLLGMF. Residues 417–430 lie on the Periplasmic side of the membrane; the sequence is GQQHIGIDSSATHH. A helical membrane pass occupies residues 431–451; sequence VFMYTWLCMAVIIALPAIIFA. The Cytoplasmic portion of the chain corresponds to 452-470; that stretch reads RVPNDTQQNMVISRRKRSL.

This sequence belongs to the major facilitator superfamily. TCR/Tet family.

The protein localises to the cell inner membrane. In Salmonella heidelberg (strain SL476), this protein is Putative multidrug resistance protein MdtD.